A 38-amino-acid polypeptide reads, in one-letter code: GFGCPWNRYQCHSHCRSIGRLGGYCAGSLRLTCTCYRS.

3 disulfides stabilise this stretch: Cys4-Cys25, Cys11-Cys33, and Cys15-Cys35.

Its subcellular location is the secreted. In terms of biological role, has antibacterial activity against the Gram-positive bacteria L.lactis and S.aureus, and against the Gram-negative bacteria E.coli D32 and V.parahemolyticus. This chain is Defensin-1, found in Crassostrea virginica (Eastern oyster).